A 466-amino-acid polypeptide reads, in one-letter code: Eukaryotic translation initiation factor 3 subunit M (466 aa).

The tract at residues 40 to 62 (EISPLLEPLRQQEQSDAEPDRKQ) is disordered. The region spanning 211-378 (AQTHILQALQ…SEFLVHRATY (168 aa)) is the PCI domain. The interval 424–466 (AAEEAAQGKSNDKGNKSGDRRQRHGNNQQSQQQQQPQEVAAAE) is disordered. The span at 433–443 (SNDKGNKSGDR) shows a compositional bias: basic and acidic residues. The segment covering 451-460 (QQSQQQQQPQ) has biased composition (low complexity).

It belongs to the eIF-3 subunit M family. Component of the eukaryotic translation initiation factor 3 (eIF-3) complex.

Its subcellular location is the cytoplasm. Functionally, component of the eukaryotic translation initiation factor 3 (eIF-3) complex, which is involved in protein synthesis of a specialized repertoire of mRNAs and, together with other initiation factors, stimulates binding of mRNA and methionyl-tRNAi to the 40S ribosome. The eIF-3 complex specifically targets and initiates translation of a subset of mRNAs involved in cell proliferation. The chain is Eukaryotic translation initiation factor 3 subunit M from Aspergillus oryzae (strain ATCC 42149 / RIB 40) (Yellow koji mold).